The sequence spans 226 residues: Ribose-5-phosphate isomerase A (226 aa).

Substrate-binding positions include 25 to 28 (TGST), 81 to 84 (DGAD), and 94 to 97 (KGGG). Catalysis depends on Glu103, which acts as the Proton acceptor. Lys121 contacts substrate.

This sequence belongs to the ribose 5-phosphate isomerase family. In terms of assembly, homodimer.

It catalyses the reaction aldehydo-D-ribose 5-phosphate = D-ribulose 5-phosphate. The protein operates within carbohydrate degradation; pentose phosphate pathway; D-ribose 5-phosphate from D-ribulose 5-phosphate (non-oxidative stage): step 1/1. Catalyzes the reversible conversion of ribose-5-phosphate to ribulose 5-phosphate. The polypeptide is Ribose-5-phosphate isomerase A (Enterococcus faecalis (strain ATCC 700802 / V583)).